Here is a 141-residue protein sequence, read N- to C-terminus: Large ribosomal subunit protein uL11 (141 aa).

The protein belongs to the universal ribosomal protein uL11 family. In terms of assembly, part of the ribosomal stalk of the 50S ribosomal subunit. Interacts with L10 and the large rRNA to form the base of the stalk. L10 forms an elongated spine to which L12 dimers bind in a sequential fashion forming a multimeric L10(L12)X complex. In terms of processing, one or more lysine residues are methylated.

In terms of biological role, forms part of the ribosomal stalk which helps the ribosome interact with GTP-bound translation factors. This is Large ribosomal subunit protein uL11 from Chlamydia caviae (strain ATCC VR-813 / DSM 19441 / 03DC25 / GPIC) (Chlamydophila caviae).